The following is a 1326-amino-acid chain: Probable serine/threonine-protein kinase gdt8 (1326 aa).

The N-terminal stretch at 1–22 is a signal peptide; sequence MINKILIKLITIIIFCFSFLFA. The Extracellular portion of the chain corresponds to 23–782; that stretch reads EEDLIRTPPG…VDRNENLELK (760 aa). Disordered regions lie at residues 419 to 467 and 731 to 762; these read VDQN…GNQG and EPPT…QTPI. Composition is skewed to low complexity over residues 422 to 460 and 731 to 761; these read NNNN…NNNN and EPPT…TQTP. A helical membrane pass occupies residues 783–803; that stretch reads IALPICLSLALLIGIIIMICI. Residues 804-1326 are Cytoplasmic-facing; that stretch reads FKKVQSNSKL…TKEDKDLDEN (523 aa). Residues 833–858 form a disordered region; the sequence is IVSQPPTVIEEKPQDNSKPDDQKLIE. Residues 841–858 are compositionally biased toward basic and acidic residues; it reads IEEKPQDNSKPDDQKLIE. The 257-residue stretch at 1036 to 1292 folds into the Protein kinase domain; it reads IKTEQLIASY…FSEISLHLEI (257 aa). ATP-binding positions include 1042 to 1050 and lysine 1065; that span reads IASYLPSKV. The active-site Proton acceptor is the aspartate 1158. Residues 1301-1326 are disordered; it reads MNESEESTSNHNTNSKTKEDKDLDEN. Residues 1316-1326 are compositionally biased toward basic and acidic residues; it reads KTKEDKDLDEN.

The protein in the N-terminal section; belongs to the GDT family. This sequence in the C-terminal section; belongs to the protein kinase superfamily. TKL Ser/Thr protein kinase family.

It localises to the membrane. It carries out the reaction L-seryl-[protein] + ATP = O-phospho-L-seryl-[protein] + ADP + H(+). The catalysed reaction is L-threonyl-[protein] + ATP = O-phospho-L-threonyl-[protein] + ADP + H(+). The polypeptide is Probable serine/threonine-protein kinase gdt8 (gdt8) (Dictyostelium discoideum (Social amoeba)).